The primary structure comprises 193 residues: Orotate phosphoribosyltransferase (193 aa).

5-phospho-alpha-D-ribose 1-diphosphate contacts are provided by residues Arg102, Lys103, Lys106, His108, and Glu129–Ser137. Residues Thr133 and Arg161 each contribute to the orotate site.

This sequence belongs to the purine/pyrimidine phosphoribosyltransferase family. PyrE subfamily. In terms of assembly, homodimer. Mg(2+) serves as cofactor.

The enzyme catalyses orotidine 5'-phosphate + diphosphate = orotate + 5-phospho-alpha-D-ribose 1-diphosphate. It participates in pyrimidine metabolism; UMP biosynthesis via de novo pathway; UMP from orotate: step 1/2. In terms of biological role, catalyzes the transfer of a ribosyl phosphate group from 5-phosphoribose 1-diphosphate to orotate, leading to the formation of orotidine monophosphate (OMP). This is Orotate phosphoribosyltransferase from Prochlorococcus marinus (strain NATL1A).